The chain runs to 342 residues: D-erythrose-4-phosphate dehydrogenase (342 aa).

Position 12 to 13 (12 to 13 (RI)) interacts with NAD(+). Substrate-binding positions include 154 to 156 (SCT), R200, 213 to 214 (TK), and R236. C155 (nucleophile) is an active-site residue. N318 is a binding site for NAD(+).

The protein belongs to the glyceraldehyde-3-phosphate dehydrogenase family. Epd subfamily. In terms of assembly, homotetramer.

Its subcellular location is the cytoplasm. It carries out the reaction D-erythrose 4-phosphate + NAD(+) + H2O = 4-phospho-D-erythronate + NADH + 2 H(+). It participates in cofactor biosynthesis; pyridoxine 5'-phosphate biosynthesis; pyridoxine 5'-phosphate from D-erythrose 4-phosphate: step 1/5. Functionally, catalyzes the NAD-dependent conversion of D-erythrose 4-phosphate to 4-phosphoerythronate. In Klebsiella pneumoniae subsp. pneumoniae (strain ATCC 700721 / MGH 78578), this protein is D-erythrose-4-phosphate dehydrogenase.